The primary structure comprises 343 residues: Flavonoid 4'-O-methyltransferase 4 (343 aa).

Asp-211 contacts S-adenosyl-L-methionine. The Proton acceptor role is filled by His-249.

The protein belongs to the class I-like SAM-binding methyltransferase superfamily. Cation-independent O-methyltransferase family. Homodimer.

The catalysed reaction is apigenin + S-adenosyl-L-methionine = acacetin + S-adenosyl-L-homocysteine + H(+). The enzyme catalyses kaempferol + S-adenosyl-L-methionine = kaempferide + S-adenosyl-L-homocysteine + H(+). It catalyses the reaction isorhamnetin + S-adenosyl-L-methionine = 3',4'-O-dimethylquercetin + S-adenosyl-L-homocysteine + 2 H(+). It carries out the reaction scutellarein + S-adenosyl-L-methionine = scutellarein 4'-methyl ether + S-adenosyl-L-homocysteine + H(+). The catalysed reaction is (2S)-naringenin + S-adenosyl-L-methionine = (2S)-naringenin 4'-methyl ether + S-adenosyl-L-homocysteine + H(+). The enzyme catalyses 4',7,8-trihydroxyflavone + S-adenosyl-L-methionine = 7,8-dihydroxy-4'-methoxyflavone + S-adenosyl-L-homocysteine + H(+). It catalyses the reaction taxifolin + S-adenosyl-L-methionine = taxifolin 4'-methyl ether + S-adenosyl-L-homocysteine + H(+). The protein operates within flavonoid metabolism. In terms of biological role, flavonoid 4'-O-methyltransferase involved in the biosynthesis of polymethoxylated flavonoids natural products such as pebrellin, aroma compounds which contribute to the flavor of peppermint, and exhibit pharmacological activities such as anti-allergic, anti-oxidant, antibacterial, anti-proliferative, and anti-inflammatory effects. Catalyzes S-adenosylmethionine-dependent regioselective 4'-O-methylation of flavonoids; active on various hydroxylated flavonoid substrates, including isorhamnetin, kaempferol, apigenin (API), scutellarein (6-hydroxy-apigenin, 6-OH-API, SCU), taxifolin, 7,8,4'-trihydroxy-flavone and naringenin (NAR), and, with a lower efficiency, quercetin, rhamnetin, luteolin (LUT) and 7,8,3',4'-tetrahydroxy-flavone. In Mentha piperita (Peppermint), this protein is Flavonoid 4'-O-methyltransferase 4.